The primary structure comprises 493 residues: MLTLLVLVFTVGLLLYVKLRWHYSYWSRRGVAGERPVYFRGNMSGLGRDLHWTDINLRIYRKFRGVERYCGYFTFMTKSLFIMDLELIRDIMIRDFSSFADRGLFHNVRDDPLTGNLLFLDGPEWRWLRQNLTQVFTSGKMKFMFPNMVEVGEKLTQACRLQVGEIEAKDLCARFTTDVIGSCAFGLECNSLQDPESQFRRMGRSVTQEPLHSVLVQAFMFAQPELARKLRFRLFRPEVSEFFLDTVRQTLDYRRRENIHRNDLIQLLMELGEEGVKDALSFEQIAAQALVFFLAGFDTSSTTMSFCLYELALNPDVQERLRVEVLAVLKRNNQKLTYDSVQEMPYLDQVVAETLRKYPILPHLLRRSTKEYQIPNSNLILEPGSKIIIPVHSIHHDPELYPDPEKFDPSRFEPEEIKARHPFAYLPFGEGPRNCIGERFGKLQVKVGLVYLLRDFKFSRSEKTQIPLKFSSRNFLISTQEGVHLRMEGLERP.

C435 contributes to the heme binding site.

The protein belongs to the cytochrome P450 family. It depends on heme as a cofactor.

The protein resides in the endoplasmic reticulum membrane. Its subcellular location is the microsome membrane. In terms of biological role, may be involved in the metabolism of insect hormones and in the breakdown of synthetic insecticides. This Drosophila melanogaster (Fruit fly) protein is Probable cytochrome P450 6a13 (Cyp6a13).